A 651-amino-acid chain; its full sequence is MEHHKPLLPTSSHAAPNPRTRKDLLLLLCALLFLSSLVAFGRNRASNVPHDHVSSSASNHQQEHQSPTSLPSSKWHAVSRGVSSGVSEKSSSMLFSGEGGASEAFPWDNSMLSWQRTSFHFQPEKNWMNDPNGPMYYKGWYHFFYQYNPNGAVWGDIVWGHAVSRDMIHWLHLPLAMVADQWYDKQGVWTGSATILPNGEIIMLYTGSTNESVQVQNLAYPADPSDPLLVDWIKHPGNPVLVPPPGIGAKDFRDPTTAWLTSEGKWRITIGSKLNKTGIALVYDTDDFKTYELKNGHLRAVPGTGMWECVDFFPVSKKNENGLDTSLSINGAEVKYVMKVSLDDDRHDYYTIGTYDENKVLFTPDDVKNDVGVGLRYDYGIFYASKTFYDQNMDRRILWGWIGESDSEYADVTKGWASVQSIPRTVRLDKKTGSNLLQWPVAEVESLRLRSDEFKSLKAKPGSVVSLDIETATQLDVVAEFEIDAESLQKTAQSNEEFTCSTSGGAAQRGALGPFGLLVLADEGLSEYTPVYFYVIKGRNGNLKTSFCSDQSRSSQPNDVRKQIFGNIVPVLEGEKFSLRMLVDHSIVESFAQGGRTCVTSRVYPTKAIYGAARLFLFNNATEATVTASLKIWQMNSAFIRPFPFNPDQKN.

Over 1–23 the chain is Cytoplasmic; the sequence is MEHHKPLLPTSSHAAPNPRTRKD. The propeptide at 1–103 is removed in mature form; that stretch reads MEHHKPLLPT…LFSGEGGASE (103 aa). A helical; Signal-anchor for type II membrane protein transmembrane segment spans residues 24 to 44; the sequence is LLLLLCALLFLSSLVAFGRNR. At 45–651 the chain is on the lumenal side; it reads ASNVPHDHVS…PFPFNPDQKN (607 aa). Residues 48–76 are disordered; it reads VPHDHVSSSASNHQQEHQSPTSLPSSKWH. Over residues 54–72 the composition is skewed to polar residues; it reads SSSASNHQQEHQSPTSLPS. Substrate contacts are provided by residues 127–130, Gln146, Trp154, and 189–190; these read WMND and WT. Asp130 is an active-site residue. An N-linked (GlcNAc...) asparagine glycan is attached at Asn210. Residue 253 to 254 participates in substrate binding; sequence RD. N-linked (GlcNAc...) asparagine glycosylation occurs at Asn275. Residues Glu308 and Asp343 each coordinate substrate. Cys500 and Cys548 are disulfide-bonded. An N-linked (GlcNAc...) asparagine glycan is attached at Asn620.

It belongs to the glycosyl hydrolase 32 family. As to quaternary structure, may be present in two forms, a 70 kDa monomer and a heterodimer of the 30 kDa and 38 kDa subunits. The ratio of the levels of the two forms within cells appears to be regulated developmentally.

It localises to the membrane. The protein localises to the vacuole lumen. It catalyses the reaction Hydrolysis of terminal non-reducing beta-D-fructofuranoside residues in beta-D-fructofuranosides.. Its pathway is glycan biosynthesis; sucrose metabolism. In Phaseolus vulgaris (Kidney bean), this protein is Acid beta-fructofuranosidase.